Consider the following 149-residue polypeptide: Large ribosomal subunit protein bL9 (149 aa).

It belongs to the bacterial ribosomal protein bL9 family.

In terms of biological role, binds to the 23S rRNA. The protein is Large ribosomal subunit protein bL9 of Helicobacter pylori (strain P12).